Consider the following 87-residue polypeptide: UPF0237 protein YjhC (87 aa).

In terms of domain architecture, ACT spans 4-76; sequence VVTVVGADKI…EALGVNIHVQ (73 aa).

This sequence belongs to the UPF0237 family.

The chain is UPF0237 protein YjhC (yjhC) from Lactococcus lactis subsp. lactis (strain IL1403) (Streptococcus lactis).